The sequence spans 169 residues: MKKCSIILASVLLATSINAIADTPTPLNQQQPLEKIAPYPQAEKGMSRQVIFLEPQKDESRFKVELLIGKTLNVDCNRHMLGGNLETRTLSGWGFDYLVMDKISQPASTMMACPEDSKPQVKFVTANLGDAAMQRYNSRLPIVVYVPQGVEVKYRIWEAGEDIRSAQVK.

An N-terminal signal peptide occupies residues 1-21 (MKKCSIILASVLLATSINAIA). An intrachain disulfide couples Cys-76 to Cys-113.

Belongs to the protease inhibitor I11 (ecotin) family. In terms of assembly, homodimer.

Its subcellular location is the periplasm. Functionally, general inhibitor of pancreatic serine proteases: inhibits chymotrypsin, trypsin, elastases, factor X, kallikrein as well as a variety of other proteases. The chain is Ecotin from Yersinia pseudotuberculosis serotype O:1b (strain IP 31758).